We begin with the raw amino-acid sequence, 473 residues long: Proton-coupled folate transporter (473 aa).

A compositionally biased stretch (pro residues) spans M1–A20. The segment at M1–R21 is disordered. Residues M1–V29 are Cytoplasmic-facing. Residues E30–T48 traverse the membrane as a helical segment. The Extracellular portion of the chain corresponds to Q49 to V90. N65 and N74 each carry an N-linked (GlcNAc...) asparagine glycan. C72 and C306 are joined by a disulfide. Residues A91–S116 form a helical membrane-spanning segment. Residue N98 participates in pemetrexed binding. At D117 to G120 the chain is on the cytoplasmic side. A helical transmembrane segment spans residues R121 to M143. Over Y144–H148 the chain is Extracellular. The chain crosses the membrane as a helical span at residues V149–L162. At G163 to R185 the chain is on the cytoplasmic side. D164 and E193 together coordinate H(+). A helical transmembrane segment spans residues T186–R211. E193 is a pemetrexed binding site. Residues K212–Y216 lie on the Extracellular side of the membrane. Residues I217–A235 traverse the membrane as a helical segment. Residues L236–K274 lie on the Cytoplasmic side of the membrane. Residues L275 to V297 form a helical membrane-spanning segment. H(+) is bound at residue H289. Residues L298–D310 lie on the Extracellular side of the membrane. A helical transmembrane segment spans residues L311–L333. Position 323 (Y323) interacts with pemetrexed. Residues Q334–D339 lie on the Cytoplasmic side of the membrane. The chain crosses the membrane as a helical span at residues T340 to L359. Residues A360 to T363 are Extracellular-facing. A helical transmembrane segment spans residues P364–R384. Residues A385–Q396 are Cytoplasmic-facing. Residues G397–Y422 traverse the membrane as a helical segment. The pemetrexed site is built by E407 and S411. Topologically, residues P423–R430 are extracellular. The chain crosses the membrane as a helical span at residues G431–G449. Residues W450–G473 lie on the Cytoplasmic side of the membrane.

Belongs to the major facilitator superfamily. SLC46A family. As to quaternary structure, monomer. Widely expressed, including brain, aorta, liver, kidney, spleen, small intestine, pancreas, ovary and testis.

The protein resides in the cell membrane. It is found in the apical cell membrane. It localises to the basolateral cell membrane. The protein localises to the endosome membrane. Its subcellular location is the cytoplasm. It catalyses the reaction folate(in) + H(+)(in) = folate(out) + H(+)(out). It carries out the reaction (6S)-5-methyl-5,6,7,8-tetrahydrofolate(in) + H(+)(in) = (6S)-5-methyl-5,6,7,8-tetrahydrofolate(out) + H(+)(out). The enzyme catalyses methotrexate(in) + H(+)(in) = methotrexate(out) + H(+)(out). The catalysed reaction is pemetrexed(in) + H(+)(in) = pemetrexed(out) + H(+)(out). Functionally, proton-coupled folate symporter that mediates folate absorption using an H(+) gradient as a driving force. Involved in the intestinal absorption of folates at the brush-border membrane of the proximal jejunum, and the transport from blood to cerebrospinal fluid across the choroid plexus. Functions at acidic pH via alternate outward- and inward-open conformation states. Protonation of residues in the outward open state primes the protein for transport. Binding of folate promotes breaking of salt bridge network and subsequent closure of the extracellular gate, leading to the inward-open state and release of protons and folate. Also able to transport antifolate drugs, such as methotrexate and pemetrexed. Also acts as a lower-affinity, pH-independent heme carrier protein and constitutes the main importer of heme in the intestine. Imports heme in the retina and retinal pigment epithelium, in neurons of the hippocampus, in hepatocytes and in the renal epithelial cells. The protein is Proton-coupled folate transporter of Gallus gallus (Chicken).